The chain runs to 21 residues: Hemolymph 65 kDa lectin BG04 (21 aa).

In terms of tissue distribution, hemolymph.

It localises to the secreted. Its function is as follows. Binds and precipitates antigens of the parasite Echinostoma paraensei. The protein is Hemolymph 65 kDa lectin BG04 (BG04) of Biomphalaria glabrata (Bloodfluke planorb).